Here is a 1381-residue protein sequence, read N- to C-terminus: Contactin-associated protein 1 (1381 aa).

The first 20 residues, 1–20, serve as a signal peptide directing secretion; that stretch reads MMSLRLFSILLAAVVSGAQG. Residues 21–1284 are Extracellular-facing; that stretch reads WGYYGCNEEL…PYYHDDGWIA (1264 aa). Residues 26–169 form the F5/8 type C domain; it reads CNEELVGPLY…IGLRLGIYGC (144 aa). Cys26 and Cys169 are oxidised to a cystine. Residues Asn121, Asn129, and Asn277 are each glycosylated (N-linked (GlcNAc...) asparagine). Laminin G-like domains are found at residues 204–356 and 390–539; these read FKTE…AFRC and FRTW…FDTC. A disulfide bond links Cys324 and Cys356. N-linked (GlcNAc...) asparagine glycans are attached at residues Asn421, Asn500, and Asn519. Disulfide bonds link Cys507/Cys539, Cys545/Cys556, Cys550/Cys565, and Cys567/Cys577. The 33-residue stretch at 544–576 folds into the EGF-like 1 domain; sequence RCSPNMCEHDGRCYQSWDDFICYCELTGYKGVT. One can recognise a Fibrinogen C-terminal domain in the interval 577-796; it reads CHEPLYKESC…NTISFRTGAA (220 aa). Residues Asn598, Asn654, Asn665, Asn764, Asn805, Asn844, Asn861, Asn949, and Asn957 are each glycosylated (N-linked (GlcNAc...) asparagine). Positions 814–958 constitute a Laminin G-like 3 domain; it reads FRTSAPSGVF…NASEGTFPNC (145 aa). Disulfide bonds link Cys931–Cys958, Cys962–Cys975, Cys969–Cys984, and Cys986–Cys996. The EGF-like 2 domain occupies 962–996; it reads CTHPRFPCFHGGRCVERYSYYTCDCDLTAFDGPYC. N-linked (GlcNAc...) asparagine glycosylation is found at Asn1079 and Asn1148. Residues 1089–1251 form the Laminin G-like 4 domain; sequence FSTSSAPAVL…VQGELSESNC (163 aa). The cysteines at positions 1210 and 1251 are disulfide-linked. A helical transmembrane segment spans residues 1285-1305; the sequence is ILLGFLVAFLLLGLVGMLVLF. Topologically, residues 1306 to 1381 are cytoplasmic; that stretch reads YLQNHRYKGS…PQILEESRSE (76 aa). Residues 1317–1381 are disordered; that stretch reads HTNEPKATHD…PQILEESRSE (65 aa). A compositionally biased stretch (basic and acidic residues) spans 1319–1329; it reads NEPKATHDSHP. The SH3-binding motif lies at 1329 to 1366; the sequence is PGGKAPLPPSGPAQAPAPTPAPTQVPTPAPAPASGPGP. The span at 1334–1363 shows a compositional bias: pro residues; sequence PLPPSGPAQAPAPTPAPTQVPTPAPAPASG. Ser1380 is modified (phosphoserine).

Belongs to the neurexin family. Interacts with CNTN1/contactin in cis form. Predominantly expressed in brain. In myelinated nerve fibers of the CNS predominantly found in paranodal axoglial junctions. In unmyelinated nerve fibers of the CNS diffusely distributed along the entire surface. Weak expression is detected in ovary, pancreas, colon, lung, heart, intestine and testis.

The protein resides in the membrane. The protein localises to the cell junction. It is found in the paranodal septate junction. Required, with CNTNAP2, for radial and longitudinal organization of myelinated axons. Plays a role in the formation of functional distinct domains critical for saltatory conduction of nerve impulses in myelinated nerve fibers. Demarcates the paranodal region of the axo-glial junction. In association with contactin involved in the signaling between axons and myelinating glial cells. This is Contactin-associated protein 1 (Cntnap1) from Rattus norvegicus (Rat).